The chain runs to 485 residues: Putative phosphoethanolamine transferase HI_1064 (485 aa).

Helical transmembrane passes span 33 to 53 (ILPALFAVICAAFAGYFILIG), 55 to 75 (GMFTEPSVALILLATITILLL), 81 to 101 (SFYFILLPLTLLHAFYTPTGL), and 125 to 145 (FLLQIPVSSYLIAFAIPILIF).

The protein belongs to the phosphoethanolamine transferase family.

Its subcellular location is the cell membrane. The sequence is that of Putative phosphoethanolamine transferase HI_1064 from Haemophilus influenzae (strain ATCC 51907 / DSM 11121 / KW20 / Rd).